Consider the following 342-residue polypeptide: Flotillin-like protein FloA (342 aa).

2 helical membrane-spanning segments follow: residues 18–38 (FFIF…GKFI) and 39–59 (SLWF…IIGM).

It belongs to the flotillin-like FloA family. In terms of assembly, homooligomerizes.

It localises to the cell membrane. Its subcellular location is the membrane raft. Found in functional membrane microdomains (FMM) that may be equivalent to eukaryotic membrane rafts. FMMs are highly dynamic and increase in number as cells age. Flotillins are thought to be important factors in membrane fluidity. The polypeptide is Flotillin-like protein FloA (Protochlamydia amoebophila (strain UWE25)).